A 584-amino-acid polypeptide reads, in one-letter code: Complement component C8 alpha chain (584 aa).

The N-terminal stretch at Met-1–Ala-20 is a signal peptide. Residues Gln-21–Arg-30 constitute a propeptide that is removed on maturation. Residues Thr-38–Val-91 enclose the TSP type-1 1 domain. 7 cysteine pairs are disulfide-bonded: Cys-39-Cys-74, Cys-50-Cys-84, Cys-53-Cys-90, Cys-96-Cys-108, Cys-102-Cys-121, Cys-115-Cys-130, and Cys-140-Cys-177. A C-linked (Man) tryptophan glycan is attached at Trp-44. An LDL-receptor class A domain is found at Ala-94–Asp-132. Ca(2+) is bound by residues Leu-113, Asn-116, Asp-118, Asp-120, Asp-126, and Glu-127. An MACPF domain is found at Ala-135–Arg-498. Beta stranded transmembrane passes span Phe-248–Pro-256, Ser-259–Gly-266, Gly-377–Tyr-384, and Val-390–Ser-395. The cysteines at positions 375 and 399 are disulfide-linked. An N-linked (GlcNAc...) asparagine glycan is attached at Asn-437. 4 cysteine pairs are disulfide-bonded: Cys-497–Cys-544, Cys-499–Cys-515, Cys-502–Cys-517, and Cys-519–Cys-528. The EGF-like domain maps to Cys-499–Glu-529. The 45-residue stretch at Asp-539–Ala-583 folds into the TSP type-1 2 domain. Residues Trp-542, Trp-545, and Trp-548 are each glycosylated (C-linked (Man) tryptophan). Cystine bridges form between Cys-551–Cys-584 and Cys-562–Cys-574. The disordered stretch occupies residues Cys-562–Cys-584.

The protein belongs to the complement C6/C7/C8/C9 family. In terms of assembly, heterotrimer of 3 chains: alpha (C8A), beta (C8B) and gamma (C8G); the alpha and gamma chains are disulfide bonded. Component of the membrane attack complex (MAC), composed of complement C5b, C6, C7, C8A, C8B, C8G and multiple copies of the pore-forming subunit C9.

It localises to the secreted. The protein resides in the target cell membrane. With respect to regulation, membrane attack complex (MAC) assembly is inhibited by CD59, thereby protecting self-cells from damage during complement activation. CD59 acts by binding to the beta-haipins of C8 (C8A and C8B), forming an intermolecular beta-sheet that prevents incorporation of the multiple copies of C9 required for complete formation of the osmolytic pore. MAC assembly is also inhibited by clusterin (CLU) chaperones that inhibit polymerization of C9. Component of the membrane attack complex (MAC), a multiprotein complex activated by the complement cascade, which inserts into a target cell membrane and forms a pore, leading to target cell membrane rupture and cell lysis. The MAC is initiated by proteolytic cleavage of C5 into complement C5b in response to the classical, alternative, lectin and GZMK complement pathways. The complement pathways consist in a cascade of proteins that leads to phagocytosis and breakdown of pathogens and signaling that strengthens the adaptive immune system. C8A, together with C8B and C8G, inserts into the target membrane, but does not form pores by itself. During MAC assembly, associates with C5b, C6 and C7 to form the C5b8 intermediate complex that inserts into the target membrane and traverses the bilayer increasing membrane rigidity. This chain is Complement component C8 alpha chain, found in Homo sapiens (Human).